The primary structure comprises 165 residues: Chorismate pyruvate-lyase (165 aa).

4 residues coordinate substrate: Met35, Arg77, Leu115, and Glu156.

The protein belongs to the UbiC family. As to quaternary structure, monomer.

It localises to the cytoplasm. It catalyses the reaction chorismate = 4-hydroxybenzoate + pyruvate. The protein operates within cofactor biosynthesis; ubiquinone biosynthesis. In terms of biological role, removes the pyruvyl group from chorismate, with concomitant aromatization of the ring, to provide 4-hydroxybenzoate (4HB) for the ubiquinone pathway. The polypeptide is Chorismate pyruvate-lyase (Escherichia coli O157:H7).